A 99-amino-acid polypeptide reads, in one-letter code: Acylphosphatase (99 aa).

The region spanning 5-97 is the Acylphosphatase-like domain; that stretch reads IRQVMISGRV…QPGERFSILS (93 aa). Active-site residues include Arg-20 and Asn-38.

This sequence belongs to the acylphosphatase family.

It catalyses the reaction an acyl phosphate + H2O = a carboxylate + phosphate + H(+). The sequence is that of Acylphosphatase (acyP) from Rhodopseudomonas palustris (strain ATCC BAA-98 / CGA009).